The following is a 210-amino-acid chain: Glutathione S-transferase P 1 (210 aa).

The region spanning proline 2–glycine 81 is the GST N-terminal domain. At tyrosine 4 the chain carries Phosphotyrosine; by EGFR. Residues tyrosine 8, arginine 14, tryptophan 39, lysine 45, and glutamine 52–leucine 53 each bind glutathione. Threonine 62 is modified (phosphothreonine). Residue glutamine 65 to serine 66 coordinates glutathione. The GST C-terminal domain occupies asparagine 83–isoleucine 204. 2 positions are modified to N6-succinyllysine: lysine 103 and lysine 116. Lysine 128 is modified (N6-acetyllysine).

In terms of assembly, homodimer. Interacts with CDK5. In terms of tissue distribution, ubiquitously expressed.

It is found in the cytoplasm. It localises to the mitochondrion. The protein resides in the nucleus. The catalysed reaction is RX + glutathione = an S-substituted glutathione + a halide anion + H(+). The enzyme catalyses prostaglandin J2 + glutathione = prostaglandin J2-S-(R)-glutathione. It carries out the reaction prostaglandin J2 + glutathione = prostaglandin J2-S-(S)-glutathione. It catalyses the reaction prostaglandin A2 + glutathione = prostaglandin A2-S-(S)-glutathione. The catalysed reaction is 11(S)-hydroxy-14(S),15(S)-epoxy-(5Z,8Z,12E)-eicosatrienoate + glutathione = (11S,15S)-dihydroxy-14(R)-S-glutathionyl-(5Z,8Z,12E)-eicosatrienoate. Conjugation of reduced glutathione to a wide number of exogenous and endogenous hydrophobic electrophiles. Involved in the formation of glutathione conjugates of both prostaglandin A2 (PGA2) and prostaglandin J2 (PGJ2). Participates in the formation of novel hepoxilin regioisomers. Negatively regulates CDK5 activity via p25/p35 translocation to prevent neurodegeneration. The protein is Glutathione S-transferase P 1 of Mus musculus (Mouse).